The primary structure comprises 337 residues: Probable uridine nucleosidase 2 (337 aa).

Histidine 260 is an active-site residue.

The protein belongs to the IUNH family.

It localises to the cytoplasm. The catalysed reaction is uridine + H2O = D-ribose + uracil. In terms of biological role, involved in pyrimidine breakdown. In Oryza sativa subsp. japonica (Rice), this protein is Probable uridine nucleosidase 2 (URH2).